A 225-amino-acid polypeptide reads, in one-letter code: Putative 5'-nucleotidase alr3139 (225 aa).

The a divalent metal cation site is built by Asp8, Asp9, Ser37, and Asn88.

Belongs to the SurE nucleotidase family. It depends on a divalent metal cation as a cofactor.

Its subcellular location is the cytoplasm. It carries out the reaction a ribonucleoside 5'-phosphate + H2O = a ribonucleoside + phosphate. In terms of biological role, nucleotidase that shows phosphatase activity on nucleoside 5'-monophosphates. The protein is Putative 5'-nucleotidase alr3139 of Synechocystis sp. (strain ATCC 27184 / PCC 6803 / Kazusa).